The primary structure comprises 37 residues: Large ribosomal subunit protein bL36 (37 aa).

Belongs to the bacterial ribosomal protein bL36 family.

In Dictyoglomus thermophilum (strain ATCC 35947 / DSM 3960 / H-6-12), this protein is Large ribosomal subunit protein bL36.